Consider the following 612-residue polypeptide: Elongation factor 4 (612 aa).

The tr-type G domain maps to 11-193 (NHIRNFSIVA…KIVTDIPAPS (183 aa)). Residues 23–28 (DHGKST) and 140–143 (NKID) each bind GTP.

Belongs to the TRAFAC class translation factor GTPase superfamily. Classic translation factor GTPase family. LepA subfamily.

It is found in the cell membrane. The catalysed reaction is GTP + H2O = GDP + phosphate + H(+). Functionally, required for accurate and efficient protein synthesis under certain stress conditions. May act as a fidelity factor of the translation reaction, by catalyzing a one-codon backward translocation of tRNAs on improperly translocated ribosomes. Back-translocation proceeds from a post-translocation (POST) complex to a pre-translocation (PRE) complex, thus giving elongation factor G a second chance to translocate the tRNAs correctly. Binds to ribosomes in a GTP-dependent manner. This chain is Elongation factor 4, found in Lactobacillus acidophilus (strain ATCC 700396 / NCK56 / N2 / NCFM).